The primary structure comprises 391 residues: Elongation factor Tu (391 aa).

The region spanning 10 to 201 is the tr-type G domain; that stretch reads KPHVNIGTIG…AVDDYIPTPA (192 aa). The segment at 19–26 is G1; the sequence is GHVDHGKT. Residue 19–26 participates in GTP binding; sequence GHVDHGKT. Position 26 (threonine 26) interacts with Mg(2+). Residues 55–59 are G2; it reads GITIS. The G3 stretch occupies residues 76–79; the sequence is DCPG. GTP-binding positions include 76-80 and 131-134; these read DCPGH and NKVD. The segment at 131-134 is G4; the sequence is NKVD. The G5 stretch occupies residues 169 to 171; that stretch reads SAL.

This sequence belongs to the TRAFAC class translation factor GTPase superfamily. Classic translation factor GTPase family. EF-Tu/EF-1A subfamily. Monomer.

It localises to the cytoplasm. It carries out the reaction GTP + H2O = GDP + phosphate + H(+). GTP hydrolase that promotes the GTP-dependent binding of aminoacyl-tRNA to the A-site of ribosomes during protein biosynthesis. The polypeptide is Elongation factor Tu (Dinoroseobacter shibae (strain DSM 16493 / NCIMB 14021 / DFL 12)).